A 498-amino-acid polypeptide reads, in one-letter code: Protein spinster homolog 3 (498 aa).

12 helical membrane-spanning segments follow: residues isoleucine 49–valine 71, glycine 87–leucine 107, lysine 114–valine 134, leucine 148–phenylalanine 168, leucine 175–glycine 195, tryptophan 207–isoleucine 227, phenylalanine 260–tryptophan 280, tyrosine 309–isoleucine 329, leucine 343–alanine 363, phenylalanine 373–leucine 393, leucine 407–isoleucine 427, and leucine 451–isoleucine 471.

This sequence belongs to the major facilitator superfamily. Spinster (TC 2.A.1.49) family.

The protein localises to the membrane. Its function is as follows. Sphingolipid transporter. The protein is Protein spinster homolog 3 (spns3) of Danio rerio (Zebrafish).